The following is a 240-amino-acid chain: MNSINKKEIEKFSKIAEEWWDPNGKFKPLHNFNPIRIRYIKENIIKDFKIRSSDKPLKNIKLLDIGCGGGLLSEPMCRLGASVVGIDASKKNIEVAKFHAKKNKLKIDYKVASPEMLKDKKKFDVILNMEIVEHVNDIDFFIKESSKLLKKNGIMFIATLNKTLKSYVFAIVGAEYILKWLPIGTHDWEKFVKPSELIDISKKNNLSLKKLDGMNFNILDNSWKVTNDTSVNYITKFIKN.

Residues Arg36, Gly66, Asp87, and Met129 each coordinate S-adenosyl-L-methionine.

Belongs to the methyltransferase superfamily. UbiG/COQ3 family.

The enzyme catalyses a 3-demethylubiquinol + S-adenosyl-L-methionine = a ubiquinol + S-adenosyl-L-homocysteine + H(+). It carries out the reaction a 3-(all-trans-polyprenyl)benzene-1,2-diol + S-adenosyl-L-methionine = a 2-methoxy-6-(all-trans-polyprenyl)phenol + S-adenosyl-L-homocysteine + H(+). It participates in cofactor biosynthesis; ubiquinone biosynthesis. Its function is as follows. O-methyltransferase that catalyzes the 2 O-methylation steps in the ubiquinone biosynthetic pathway. This chain is Ubiquinone biosynthesis O-methyltransferase, found in Pelagibacter ubique (strain HTCC1062).